Reading from the N-terminus, the 921-residue chain is Probable glucan 1,3-alpha-glucosidase (921 aa).

The N-terminal stretch at 1–20 is a signal peptide; the sequence is MRSLLFVLSLICFCSQTALS. The active-site Nucleophile is the Asp-512. Glu-515 is a catalytic residue. Residue Asp-588 is the Proton donor of the active site. Asn-689 and Asn-804 each carry an N-linked (GlcNAc...) asparagine glycan.

Belongs to the glycosyl hydrolase 31 family. In terms of assembly, heterodimer of a catalytic alpha subunit (PSL5) and a beta subunit (PSL4). In terms of tissue distribution, expressed in roots, rosette leaves, leaf blades, mature stems, cauline leaves, flower buds, flowers and siliques.

The protein localises to the endoplasmic reticulum. The enzyme catalyses Hydrolysis of terminal (1-&gt;3)-alpha-D-glucosidic links in (1-&gt;3)-alpha-D-glucans.. It participates in glycan metabolism; N-glycan metabolism. Cleaves sequentially the 2 innermost alpha-1,3-linked glucose residues from the Glc(2)Man(9)GlcNAc(2) oligosaccharide precursor of immature glycoproteins. Essential for stable accumulation of the receptor EFR that determines the specific perception of bacterial elongation factor Tu (EF-Tu), a potent elicitor of the defense response to pathogen-associated molecular patterns (PAMPs). Required for sustained activation of EFR-mediated signaling, but not receptor FLS2-mediated signaling elicited by the bacterial flagellin flg22. The sequence is that of Probable glucan 1,3-alpha-glucosidase (PSL5) from Arabidopsis thaliana (Mouse-ear cress).